A 156-amino-acid polypeptide reads, in one-letter code: Deoxyuridine 5'-triphosphate nucleotidohydrolase (156 aa).

Substrate contacts are provided by residues 76–78 (RSG), Asn89, 93–95 (TVD), and Lys103.

This sequence belongs to the dUTPase family. It depends on Mg(2+) as a cofactor.

The catalysed reaction is dUTP + H2O = dUMP + diphosphate + H(+). It functions in the pathway pyrimidine metabolism; dUMP biosynthesis; dUMP from dCTP (dUTP route): step 2/2. This enzyme is involved in nucleotide metabolism: it produces dUMP, the immediate precursor of thymidine nucleotides and it decreases the intracellular concentration of dUTP so that uracil cannot be incorporated into DNA. The sequence is that of Deoxyuridine 5'-triphosphate nucleotidohydrolase from Rhizobium rhizogenes (strain K84 / ATCC BAA-868) (Agrobacterium radiobacter).